The following is a 460-amino-acid chain: Pyruvate dehydrogenase E1 component subunit beta (460 aa).

A Lipoyl-binding domain is found at Pro-2–Leu-78. Lys-43 is subject to N6-lipoyllysine. The interval Lys-91–Ala-131 is disordered. Positions Pro-100–Ala-121 are enriched in low complexity. Glu-194 is a thiamine diphosphate binding site.

In terms of assembly, heterodimer of an alpha and a beta chain. Requires (R)-lipoate as cofactor. Thiamine diphosphate is required as a cofactor.

It carries out the reaction N(6)-[(R)-lipoyl]-L-lysyl-[protein] + pyruvate + H(+) = N(6)-[(R)-S(8)-acetyldihydrolipoyl]-L-lysyl-[protein] + CO2. The pyruvate dehydrogenase complex catalyzes the overall conversion of pyruvate to acetyl-CoA and CO(2). It contains multiple copies of three enzymatic components: pyruvate dehydrogenase (E1), dihydrolipoamide acetyltransferase (E2) and lipoamide dehydrogenase (E3). This is Pyruvate dehydrogenase E1 component subunit beta (pdhB) from Rhizobium meliloti (strain 1021) (Ensifer meliloti).